Consider the following 154-residue polypeptide: Nucleoside diphosphate kinase (154 aa).

Residues K12, F60, R88, T94, R105, and N115 each contribute to the ATP site. Residue H118 is the Pros-phosphohistidine intermediate of the active site.

It belongs to the NDK family. The cofactor is Mg(2+).

The protein localises to the cytoplasm. The catalysed reaction is a 2'-deoxyribonucleoside 5'-diphosphate + ATP = a 2'-deoxyribonucleoside 5'-triphosphate + ADP. It carries out the reaction a ribonucleoside 5'-diphosphate + ATP = a ribonucleoside 5'-triphosphate + ADP. Its function is as follows. Major role in the synthesis of nucleoside triphosphates other than ATP. The ATP gamma phosphate is transferred to the NDP beta phosphate via a ping-pong mechanism, using a phosphorylated active-site intermediate. This is Nucleoside diphosphate kinase from Haloarcula marismortui (strain ATCC 43049 / DSM 3752 / JCM 8966 / VKM B-1809) (Halobacterium marismortui).